The chain runs to 132 residues: Small ribosomal subunit protein uS8 (132 aa).

It belongs to the universal ribosomal protein uS8 family. Part of the 30S ribosomal subunit. Contacts proteins S5 and S12.

Functionally, one of the primary rRNA binding proteins, it binds directly to 16S rRNA central domain where it helps coordinate assembly of the platform of the 30S subunit. The protein is Small ribosomal subunit protein uS8 of Stenotrophomonas maltophilia (strain K279a).